The primary structure comprises 131 residues: MPTINQLITNGRKGIIKKTKSPALKNCPQRRGVCTRVYTVTPRKPNSALRKVARVRLTSGYEISSYIPGEGHNLQEHSLVLIRGGRIRDLPGVRYHIIRGTLDTAGVDGRKQGRSKYGAKKAKVAKTASAK.

Position 89 is a 3-methylthioaspartic acid (D89). A disordered region spans residues 106–131 (GVDGRKQGRSKYGAKKAKVAKTASAK). Over residues 112–124 (QGRSKYGAKKAKV) the composition is skewed to basic residues.

Belongs to the universal ribosomal protein uS12 family. As to quaternary structure, part of the 30S ribosomal subunit. Contacts proteins S8 and S17. May interact with IF1 in the 30S initiation complex.

With S4 and S5 plays an important role in translational accuracy. In terms of biological role, interacts with and stabilizes bases of the 16S rRNA that are involved in tRNA selection in the A site and with the mRNA backbone. Located at the interface of the 30S and 50S subunits, it traverses the body of the 30S subunit contacting proteins on the other side and probably holding the rRNA structure together. The combined cluster of proteins S8, S12 and S17 appears to hold together the shoulder and platform of the 30S subunit. The chain is Small ribosomal subunit protein uS12 from Endomicrobium trichonymphae.